The following is a 303-amino-acid chain: Aspartate carbamoyltransferase catalytic subunit (303 aa).

Arg51 and Thr52 together coordinate carbamoyl phosphate. Residue Lys80 coordinates L-aspartate. The carbamoyl phosphate site is built by Arg101, His129, and Gln132. The L-aspartate site is built by Arg162 and Arg221. The carbamoyl phosphate site is built by Leu260 and Pro261.

It belongs to the aspartate/ornithine carbamoyltransferase superfamily. ATCase family. In terms of assembly, heterooligomer of catalytic and regulatory chains.

The catalysed reaction is carbamoyl phosphate + L-aspartate = N-carbamoyl-L-aspartate + phosphate + H(+). The protein operates within pyrimidine metabolism; UMP biosynthesis via de novo pathway; (S)-dihydroorotate from bicarbonate: step 2/3. In terms of biological role, catalyzes the condensation of carbamoyl phosphate and aspartate to form carbamoyl aspartate and inorganic phosphate, the committed step in the de novo pyrimidine nucleotide biosynthesis pathway. The sequence is that of Aspartate carbamoyltransferase catalytic subunit from Saccharolobus islandicus (strain Y.N.15.51 / Yellowstone #2) (Sulfolobus islandicus).